The primary structure comprises 137 residues: Proofreading thioesterase EntH (137 aa).

Glu-63 (nucleophile or proton acceptor) is an active-site residue.

Belongs to the thioesterase PaaI family. As to quaternary structure, homotetramer. Dimer of dimers. Interacts specifically with the aryl carrier protein (ArCP) domain of EntB.

Its subcellular location is the cytoplasm. Its pathway is siderophore biosynthesis; enterobactin biosynthesis. Its function is as follows. Required for optimal enterobactin synthesis. Acts as a proofreading enzyme that prevents EntB misacylation by hydrolyzing the thioester bound existing between EntB and wrongly charged molecules. The chain is Proofreading thioesterase EntH from Cronobacter sakazakii (strain ATCC BAA-894) (Enterobacter sakazakii).